The sequence spans 226 residues: Ribonuclease 3 (226 aa).

An RNase III domain is found at 2-129 (IETISKTIKY…LIGAIYLDGG (128 aa)). E42 is a Mg(2+) binding site. D46 is a catalytic residue. Mg(2+)-binding residues include N115 and E118. E118 is a catalytic residue. The DRBM domain occupies 154–223 (DAKTILQEFI…ASLMLNQIKD (70 aa)).

It belongs to the ribonuclease III family. In terms of assembly, homodimer. Mg(2+) serves as cofactor.

The protein resides in the cytoplasm. It catalyses the reaction Endonucleolytic cleavage to 5'-phosphomonoester.. Its function is as follows. Digests double-stranded RNA. Involved in the processing of primary rRNA transcript to yield the immediate precursors to the large and small rRNAs (23S and 16S). Processes some mRNAs, and tRNAs when they are encoded in the rRNA operon. Processes pre-crRNA and tracrRNA of type II CRISPR loci if present in the organism. The polypeptide is Ribonuclease 3 (Ehrlichia canis (strain Jake)).